Reading from the N-terminus, the 504-residue chain is ATP synthase subunit alpha (504 aa).

ATP is bound at residue 169 to 176 (GDRQTGKT).

The protein belongs to the ATPase alpha/beta chains family. In terms of assembly, F-type ATPases have 2 components, CF(1) - the catalytic core - and CF(0) - the membrane proton channel. CF(1) has five subunits: alpha(3), beta(3), gamma(1), delta(1), epsilon(1). CF(0) has three main subunits: a(1), b(2) and c(9-12). The alpha and beta chains form an alternating ring which encloses part of the gamma chain. CF(1) is attached to CF(0) by a central stalk formed by the gamma and epsilon chains, while a peripheral stalk is formed by the delta and b chains.

The protein resides in the cell membrane. It carries out the reaction ATP + H2O + 4 H(+)(in) = ADP + phosphate + 5 H(+)(out). Produces ATP from ADP in the presence of a proton gradient across the membrane. The alpha chain is a regulatory subunit. This Clostridium botulinum (strain Langeland / NCTC 10281 / Type F) protein is ATP synthase subunit alpha.